Consider the following 405-residue polypeptide: Serpin H1 (405 aa).

The N-terminal stretch at Met-1–Ala-15 is a signal peptide. 2 N-linked (GlcNAc...) asparagine glycosylation sites follow: Asn-107 and Asn-112. Residues Arg-402–Leu-405 carry the Prevents secretion from ER motif.

It belongs to the serpin family.

Its subcellular location is the endoplasmic reticulum lumen. Binds specifically to collagen. Could be involved as a chaperone in the biosynthetic pathway of collagen. The sequence is that of Serpin H1 (SERPINH1) from Gallus gallus (Chicken).